Reading from the N-terminus, the 563-residue chain is MRLAQPDMVSAAPTEVDRLVWPLADGADKSPLGVLSTTEPLLRLQRTQRVWEVPELDAQYAKAFLELWPLGSFLVIGHEPGQVLMLKAGPSSGDINTYQIQRFPGGVSLESSNLCMPDCPHLLAFLSASRDVLPRTLLLPTPTVGAGDNHSDPHRLGCIQVDTSGRVLSVVNQLYLETHGGWGTETPQQTEPETGQKYSLAPRKPTPHRVSWVEDPLRPEAHHTGQEVHHPGADAHSLGSEVHFSCPALEEEEVNNDCYKDEDEEGCEDMLTAHIRALARTRSSYVARQYRCLRARLISDSGNPYSPGDPATELLQDVRQLLTDLQNYLAKDPDVRAVFGNRGPSILREEDLGPAVEVALCRAVLEPLKPALWTKLRTLRAQELRRLRRRQIALRVGAGPEGQSPALRNRNRIHARLAHLHAACAPRRKVALLLAVCSDVYAGLGGGENKEPLGADAFLPALTEELIWSPHIGETQLDVEFLMELLDPGELRGEAGYYLTTWFGALYHIAHYQPDTGRAPQGLSSEARASLRQWHRRRTLHQQAQPTAQANQPFEEPWAIGDP.

The disordered stretch occupies residues 181–208 (GWGTETPQQTEPETGQKYSLAPRKPTPH). The span at 184–196 (TETPQQTEPETGQ) shows a compositional bias: low complexity. One can recognise a VPS9 domain in the interval 381–518 (AQELRRLRRR…IAHYQPDTGR (138 aa)). The tract at residues 539–563 (TLHQQAQPTAQANQPFEEPWAIGDP) is disordered. The span at 542 to 553 (QQAQPTAQANQP) shows a compositional bias: low complexity.

As to quaternary structure, interacts with RAB5A, RAB22A and MUSK. Detected in thymus and spleen (at protein level). Detected in lung, liver, kidney, spleen, thymus and skeletal muscle.

It is found in the cell projection. It localises to the ruffle. The protein localises to the cytoplasmic vesicle. Functionally, guanine nucleotide exchange factor (GEF) for RAB5A and RAB22A that activates RAB5A and RAB22A by exchanging bound GDP for free GTP. Plays a role in endocytosis via its role in activating Rab family members. The chain is Ras and Rab interactor-like protein (Rinl) from Mus musculus (Mouse).